We begin with the raw amino-acid sequence, 549 residues long: Glucose-6-phosphate isomerase (549 aa).

The active-site Proton donor is the Glu355. Catalysis depends on residues His387 and Lys515.

This sequence belongs to the GPI family.

The protein resides in the cytoplasm. It catalyses the reaction alpha-D-glucose 6-phosphate = beta-D-fructose 6-phosphate. Its pathway is carbohydrate biosynthesis; gluconeogenesis. The protein operates within carbohydrate degradation; glycolysis; D-glyceraldehyde 3-phosphate and glycerone phosphate from D-glucose: step 2/4. Its function is as follows. Catalyzes the reversible isomerization of glucose-6-phosphate to fructose-6-phosphate. In Histophilus somni (strain 129Pt) (Haemophilus somnus), this protein is Glucose-6-phosphate isomerase.